A 103-amino-acid polypeptide reads, in one-letter code: Cytochrome c55X (103 aa).

The N-terminal stretch at 1-17 (MARLALLLVLLAGTAVA) is a signal peptide. Residues C36, C39, and H40 each coordinate heme c.

Binds 1 heme c group covalently per subunit.

It localises to the periplasm. Monoheme c-type cytochrome. The sequence is that of Cytochrome c55X (nirC) from Paracoccus denitrificans (strain Pd 1222).